A 329-amino-acid chain; its full sequence is Peroxidase 17 (329 aa).

The N-terminal stretch at 1–19 (MSLLPHLILYLTLLTVVVT) is a signal peptide. 4 disulfide bridges follow: Cys32–Cys112, Cys65–Cys70, Cys118–Cys315, and Cys197–Cys229. The active-site Proton acceptor is His63. Residues Asp64, Val67, Gly69, Asp71, and Ser73 each contribute to the Ca(2+) site. Pro160 contributes to the substrate binding site. N-linked (GlcNAc...) asparagine glycans are attached at residues Asn165 and Asn177. His190 contacts heme b. Ser191 serves as a coordination point for Ca(2+). Asn206 and Asn236 each carry an N-linked (GlcNAc...) asparagine glycan. Residues Asp242, Thr244, and Asp249 each contribute to the Ca(2+) site.

This sequence belongs to the peroxidase family. Classical plant (class III) peroxidase subfamily. Requires heme b as cofactor. Ca(2+) serves as cofactor.

It is found in the secreted. Its subcellular location is the vacuole. It catalyses the reaction 2 a phenolic donor + H2O2 = 2 a phenolic radical donor + 2 H2O. Its function is as follows. Removal of H(2)O(2), oxidation of toxic reductants, biosynthesis and degradation of lignin, suberization, auxin catabolism, response to environmental stresses such as wounding, pathogen attack and oxidative stress. These functions might be dependent on each isozyme/isoform in each plant tissue. This Arabidopsis thaliana (Mouse-ear cress) protein is Peroxidase 17 (PER17).